A 576-amino-acid polypeptide reads, in one-letter code: Proline--tRNA ligase (576 aa).

It belongs to the class-II aminoacyl-tRNA synthetase family. ProS type 1 subfamily. As to quaternary structure, homodimer.

Its subcellular location is the cytoplasm. It catalyses the reaction tRNA(Pro) + L-proline + ATP = L-prolyl-tRNA(Pro) + AMP + diphosphate. Catalyzes the attachment of proline to tRNA(Pro) in a two-step reaction: proline is first activated by ATP to form Pro-AMP and then transferred to the acceptor end of tRNA(Pro). As ProRS can inadvertently accommodate and process non-cognate amino acids such as alanine and cysteine, to avoid such errors it has two additional distinct editing activities against alanine. One activity is designated as 'pretransfer' editing and involves the tRNA(Pro)-independent hydrolysis of activated Ala-AMP. The other activity is designated 'posttransfer' editing and involves deacylation of mischarged Ala-tRNA(Pro). The misacylated Cys-tRNA(Pro) is not edited by ProRS. The protein is Proline--tRNA ligase of Leptospira borgpetersenii serovar Hardjo-bovis (strain L550).